We begin with the raw amino-acid sequence, 310 residues long: Tyrosine recombinase XerC (310 aa).

In terms of domain architecture, Core-binding (CB) spans 11 to 97 (NSLQKPLERF…SLRSFFDFLI (87 aa)). In terms of domain architecture, Tyr recombinase spans 118–298 (PLPKNLDVDE…DFQHLAQAYD (181 aa)). Residues R157, K181, H250, R253, and H276 contribute to the active site. Catalysis depends on Y285, which acts as the O-(3'-phospho-DNA)-tyrosine intermediate.

This sequence belongs to the 'phage' integrase family. XerC subfamily. In terms of assembly, forms a cyclic heterotetrameric complex composed of two molecules of XerC and two molecules of XerD.

The protein localises to the cytoplasm. Site-specific tyrosine recombinase, which acts by catalyzing the cutting and rejoining of the recombining DNA molecules. The XerC-XerD complex is essential to convert dimers of the bacterial chromosome into monomers to permit their segregation at cell division. It also contributes to the segregational stability of plasmids. The polypeptide is Tyrosine recombinase XerC (Vibrio parahaemolyticus serotype O3:K6 (strain RIMD 2210633)).